The sequence spans 382 residues: UDP-N-acetylenolpyruvoylglucosamine reductase (382 aa).

The FAD-binding PCMH-type domain maps to 50 to 253; sequence RVGGPAVLAE…REAVLRLRAS (204 aa). R193 is a catalytic residue. The Proton donor role is filled by S270. Residue E374 is part of the active site.

The protein belongs to the MurB family. FAD is required as a cofactor.

The protein resides in the cytoplasm. The catalysed reaction is UDP-N-acetyl-alpha-D-muramate + NADP(+) = UDP-N-acetyl-3-O-(1-carboxyvinyl)-alpha-D-glucosamine + NADPH + H(+). Its pathway is cell wall biogenesis; peptidoglycan biosynthesis. Functionally, cell wall formation. This Nocardia farcinica (strain IFM 10152) protein is UDP-N-acetylenolpyruvoylglucosamine reductase.